A 166-amino-acid chain; its full sequence is Tetranectin-like protein (166 aa).

Cystine bridges form between C37/C47, C64/C160, and C136/C152. The C-type lectin domain occupies 43-161; the sequence is IHKKCYLASR…CRSEKRYICE (119 aa).

The protein is Tetranectin-like protein of Carcharhinus perezii (Reef shark).